The sequence spans 88 residues: Small ribosomal subunit protein uS15 (88 aa).

Belongs to the universal ribosomal protein uS15 family. Part of the 30S ribosomal subunit. Forms a bridge to the 50S subunit in the 70S ribosome, contacting the 23S rRNA.

Functionally, one of the primary rRNA binding proteins, it binds directly to 16S rRNA where it helps nucleate assembly of the platform of the 30S subunit by binding and bridging several RNA helices of the 16S rRNA. Forms an intersubunit bridge (bridge B4) with the 23S rRNA of the 50S subunit in the ribosome. The sequence is that of Small ribosomal subunit protein uS15 from Caldanaerobacter subterraneus subsp. tengcongensis (strain DSM 15242 / JCM 11007 / NBRC 100824 / MB4) (Thermoanaerobacter tengcongensis).